The chain runs to 256 residues: Enolase-phosphatase E1 (256 aa).

Mg(2+)-binding residues include Asp-14 and Glu-16. Substrate-binding positions include 142–143 (SS) and Lys-176. A Mg(2+)-binding site is contributed by Asp-201.

Belongs to the HAD-like hydrolase superfamily. MasA/MtnC family. In terms of assembly, monomer. Mg(2+) serves as cofactor.

The protein localises to the cytoplasm. It localises to the nucleus. The enzyme catalyses 5-methylsulfanyl-2,3-dioxopentyl phosphate + H2O = 1,2-dihydroxy-5-(methylsulfanyl)pent-1-en-3-one + phosphate. It participates in amino-acid biosynthesis; L-methionine biosynthesis via salvage pathway; L-methionine from S-methyl-5-thio-alpha-D-ribose 1-phosphate: step 3/6. Its pathway is amino-acid biosynthesis; L-methionine biosynthesis via salvage pathway; L-methionine from S-methyl-5-thio-alpha-D-ribose 1-phosphate: step 4/6. Its function is as follows. Bifunctional enzyme that catalyzes the enolization of 2,3-diketo-5-methylthiopentyl-1-phosphate (DK-MTP-1-P) into the intermediate 2-hydroxy-3-keto-5-methylthiopentenyl-1-phosphate (HK-MTPenyl-1-P), which is then dephosphorylated to form the acireductone 1,2-dihydroxy-3-keto-5-methylthiopentene (DHK-MTPene). The chain is Enolase-phosphatase E1 from Drosophila simulans (Fruit fly).